The sequence spans 282 residues: Dof zinc finger protein 4 (282 aa).

The segment at 45–99 (VKCPRCESTNTKFCYYNNYNLSQPRHFCKSCRRYWTKGGVLRNVPVGGGCRKTKR) adopts a Dof-type zinc-finger fold. C47, C50, C72, and C75 together coordinate Zn(2+). The interval 89 to 161 (PVGGGCRKTK…TTPATPSSNT (73 aa)) is disordered. Low complexity-rich tracts occupy residues 102–117 (SSSA…TAAT) and 125–161 (RASA…SSNT).

The protein resides in the nucleus. Transcription factor that may transactivate seed storage protein genes in developing seeds. This is Dof zinc finger protein 4 from Oryza sativa subsp. japonica (Rice).